Consider the following 273-residue polypeptide: NADPH-dependent 7-cyano-7-deazaguanine reductase (273 aa).

Residue 81–83 (VES) participates in substrate binding. 83-84 (SK) provides a ligand contact to NADPH. C179 acts as the Thioimide intermediate in catalysis. The active-site Proton donor is D186. 218–219 (AE) contacts substrate. 247-248 (RG) contacts NADPH.

The protein belongs to the GTP cyclohydrolase I family. QueF type 2 subfamily. As to quaternary structure, homodimer.

Its subcellular location is the cytoplasm. It carries out the reaction 7-aminomethyl-7-carbaguanine + 2 NADP(+) = 7-cyano-7-deazaguanine + 2 NADPH + 3 H(+). Its pathway is tRNA modification; tRNA-queuosine biosynthesis. Functionally, catalyzes the NADPH-dependent reduction of 7-cyano-7-deazaguanine (preQ0) to 7-aminomethyl-7-deazaguanine (preQ1). The sequence is that of NADPH-dependent 7-cyano-7-deazaguanine reductase from Rickettsia prowazekii (strain Madrid E).